We begin with the raw amino-acid sequence, 247 residues long: PsbP domain-containing protein 3, chloroplastic (247 aa).

The transit peptide at 1–26 directs the protein to the chloroplast; the sequence is MAAISPWLSSPQSFSNPRVTITDSRR. The transit peptide at 27–80 directs the protein to the thylakoid; the sequence is CSSISAAISVLDSSNEEQHRISSRDHVGMKRRDVMLQIASSVFFLPLAISPAFA.

Belongs to the PsbP family.

The protein resides in the plastid. It is found in the chloroplast thylakoid lumen. The chain is PsbP domain-containing protein 3, chloroplastic (PPD3) from Arabidopsis thaliana (Mouse-ear cress).